We begin with the raw amino-acid sequence, 290 residues long: GTPase Era (290 aa).

Residues 2–168 (KVCIISILGR…IEILKEYAYN (167 aa)) enclose the Era-type G domain. Residues 10 to 17 (GRPNVGKS) form a G1 region. 10-17 (GRPNVGKS) contributes to the GTP binding site. The tract at residues 36–40 (QTTRD) is G2. Residues 57 to 60 (DTPG) form a G3 region. Residues 57 to 61 (DTPGI) and 118 to 121 (SKID) each bind GTP. The tract at residues 118–121 (SKID) is G4. The segment at 147 to 149 (VSN) is G5. In terms of domain architecture, KH type-2 spans 199–275 (LTDELPHSIA…TLNLKVKVSN (77 aa)).

It belongs to the TRAFAC class TrmE-Era-EngA-EngB-Septin-like GTPase superfamily. Era GTPase family. Monomer.

The protein resides in the cytoplasm. It localises to the cell membrane. Its function is as follows. An essential GTPase that binds both GDP and GTP, with rapid nucleotide exchange. Plays a role in 16S rRNA processing and 30S ribosomal subunit biogenesis and possibly also in cell cycle regulation and energy metabolism. The protein is GTPase Era of Mycoplasmopsis agalactiae (strain NCTC 10123 / CIP 59.7 / PG2) (Mycoplasma agalactiae).